The sequence spans 266 residues: tRNA dimethylallyltransferase (266 aa).

It belongs to the IPP transferase family. Monomer. Mg(2+) serves as cofactor.

It carries out the reaction adenosine(37) in tRNA + dimethylallyl diphosphate = N(6)-dimethylallyladenosine(37) in tRNA + diphosphate. Functionally, catalyzes the transfer of a dimethylallyl group onto the adenine at position 37 in tRNAs that read codons beginning with uridine, leading to the formation of N6-(dimethylallyl)adenosine (i(6)A). This Helicobacter acinonychis (strain Sheeba) protein is tRNA dimethylallyltransferase (miaA).